The primary structure comprises 510 residues: NAD(P)H-quinone oxidoreductase subunit 2 B, chloroplastic (510 aa).

13 helical membrane-spanning segments follow: residues 24–44 (LLLF…GLIL), 57–77 (IPWL…ALLF), 99–119 (IFQF…VEYI), 124–144 (MAIT…MFLC), 149–169 (LITI…LSGY), 183–203 (YLLM…WLYG), 227–247 (PGIS…LSPA), 295–315 (WHLL…LIAI), 323–343 (MLAY…IVGD), 347–367 (GYAS…GTFA), 395–415 (ALSL…AGFF), 418–438 (LHLF…IGLL), and 482–502 (LSMI…NPII).

The protein belongs to the complex I subunit 2 family. As to quaternary structure, NDH is composed of at least 16 different subunits, 5 of which are encoded in the nucleus.

It is found in the plastid. The protein resides in the chloroplast thylakoid membrane. It carries out the reaction a plastoquinone + NADH + (n+1) H(+)(in) = a plastoquinol + NAD(+) + n H(+)(out). The enzyme catalyses a plastoquinone + NADPH + (n+1) H(+)(in) = a plastoquinol + NADP(+) + n H(+)(out). NDH shuttles electrons from NAD(P)H:plastoquinone, via FMN and iron-sulfur (Fe-S) centers, to quinones in the photosynthetic chain and possibly in a chloroplast respiratory chain. The immediate electron acceptor for the enzyme in this species is believed to be plastoquinone. Couples the redox reaction to proton translocation, and thus conserves the redox energy in a proton gradient. This is NAD(P)H-quinone oxidoreductase subunit 2 B, chloroplastic from Cucumis sativus (Cucumber).